Reading from the N-terminus, the 240-residue chain is MAFDISVNASKTINALVYFSTQQDKLVIRNEVNDIHYTVEFDRDKVVDTFISYNRHNDSIEIRGVLPEETNIGRVVNTPVSMTYLYNKYSFKPILAEYIRHRNTISGNIYSALMTLDDLVIKQYGDIDLLFNEKLKVDSDSGLFDFVNFVKDMICCDSRIVVALSSLVSKHWELTNKKYRCMALAEHIADSIPISELSRLRYNLCKYLRGHTDSIEDEFDHFEDDDLSTCSAVTDRETDV.

Belongs to the orthopoxvirus OPG176 family. In terms of assembly, tetramer. Interacts with host MYD88, TRF4, TICAM2 and MAL.

In terms of biological role, BCL2-like protein which disrupts the host immune response by inhibiting the TLR4 signaling pathway leading to NF-kappa-B activation. Acts close to the plasma membrane and targets several host TIR-domain containing adapter proteins including MYD88, TIRAP, TRIF and TICAM2. In turn, blocks the host NF-kappa-B and TRIF-mediated IRF3 activation. In Cynomys gunnisoni (Gunnison's prairie dog), this protein is Protein OPG176 (OPG176).